The following is a 155-amino-acid chain: SsrA-binding protein (155 aa).

This sequence belongs to the SmpB family.

It localises to the cytoplasm. Its function is as follows. Required for rescue of stalled ribosomes mediated by trans-translation. Binds to transfer-messenger RNA (tmRNA), required for stable association of tmRNA with ribosomes. tmRNA and SmpB together mimic tRNA shape, replacing the anticodon stem-loop with SmpB. tmRNA is encoded by the ssrA gene; the 2 termini fold to resemble tRNA(Ala) and it encodes a 'tag peptide', a short internal open reading frame. During trans-translation Ala-aminoacylated tmRNA acts like a tRNA, entering the A-site of stalled ribosomes, displacing the stalled mRNA. The ribosome then switches to translate the ORF on the tmRNA; the nascent peptide is terminated with the 'tag peptide' encoded by the tmRNA and targeted for degradation. The ribosome is freed to recommence translation, which seems to be the essential function of trans-translation. The polypeptide is SsrA-binding protein (Ligilactobacillus salivarius (strain UCC118) (Lactobacillus salivarius)).